Consider the following 352-residue polypeptide: Strictosidine synthase (352 aa).

A signal peptide spans 1–31 (MANFSESKSMMAVFFMFFLLLLSSSSSSSSS). Asn-95 and Asn-187 each carry an N-linked (GlcNAc...) asparagine glycan.

It belongs to the strictosidine synthase family. As to quaternary structure, monomer.

The protein resides in the vacuole. The catalysed reaction is 3alpha(S)-strictosidine + H2O = secologanin + tryptamine. It participates in alkaloid biosynthesis; 3alpha(S)-strictosidine biosynthesis; 3alpha(S)-strictosidine from secologanin and tryptamine: step 1/1. Its function is as follows. Catalyzes the stereospecific condensation of tryptamine with secologanin to form strictosidine, the key intermediate of indole alkaloid biosynthesis. The protein is Strictosidine synthase (STR1) of Catharanthus roseus (Madagascar periwinkle).